The primary structure comprises 409 residues: MKAEILCVGTELLLGDIVNTNAQYISKELANIGIEVYHHSVIGDNENRLLKELERAFNYCDLVITTGGLGPTKDDLTKESVAKFFQEDLVLHEKSLKQIEKRLLCFNKSMTESNKKQAYFPKNCEILENPNGTAPGFIIEKDNKIAIILPGPPYEMQPMFEKKVMPYLEKLTNCTIKSKVLRITGIGESDVADLISDILESQTNPTVAPYAKQGETTLRITAKANSEEKALNLIVPIEKKIRQILEDNIYGSGETSLEEVIANILVKRNLTIATAESCTGGLLAGKLINFPGISSVFLEGAITYSNESKINRLNVKKETLEKYTAVSKEVALEMAEGIAKSSGTNIGISTTGVAGPGGGTYDKPIGLVYIGLYINGKTFVKELNYSGNRQFIRNITVTRALDFLRRNLK.

Belongs to the CinA family.

This chain is Putative competence-damage inducible protein, found in Clostridium botulinum (strain Langeland / NCTC 10281 / Type F).